A 348-amino-acid polypeptide reads, in one-letter code: MQSITIRRPDDWHLHLRDGAILEGVIADTSRTFARAIIMPNLVPPVVTTADAKAYRERILKALPDGHRFQPLMTLYLTEQTSPDDVEAGAASGLITAVKLYPAGATTNSHGGVRDMEKAMPVLERMAKIGLPLCVHGEVTTPDVDIFDREAVFIDTVLDPLRRRLPELKVTMEHVTTAGGIDYIKAAQGNLAGSITTHHLIINRNAILVGGIRPHYYCLPVAKRENHRLALRAAAVSGDPRFFLGTDSAPHVDPLKECACGCAGIYTSINTMSCLAHVFEEEGALDRLEAFASLNGPAWYGLSPNEERITLSKQADPVVFPAKIETGAGAVTVFDPMVPLHWQVSASA.

Zn(2+)-binding residues include histidine 13 and histidine 15. Substrate contacts are provided by residues 15 to 17 (HLR) and asparagine 41. Lysine 99, histidine 136, and histidine 174 together coordinate Zn(2+). Residue lysine 99 is modified to N6-carboxylysine. Residue histidine 136 participates in substrate binding. Leucine 219 provides a ligand contact to substrate. Aspartate 247 is a Zn(2+) binding site. Aspartate 247 is an active-site residue. Residues histidine 251 and alanine 263 each contribute to the substrate site.

It belongs to the metallo-dependent hydrolases superfamily. DHOase family. Class II DHOase subfamily. As to quaternary structure, homodimer. It depends on Zn(2+) as a cofactor.

It catalyses the reaction (S)-dihydroorotate + H2O = N-carbamoyl-L-aspartate + H(+). It participates in pyrimidine metabolism; UMP biosynthesis via de novo pathway; (S)-dihydroorotate from bicarbonate: step 3/3. In terms of biological role, catalyzes the reversible cyclization of carbamoyl aspartate to dihydroorotate. This is Dihydroorotase from Rhizobium etli (strain ATCC 51251 / DSM 11541 / JCM 21823 / NBRC 15573 / CFN 42).